We begin with the raw amino-acid sequence, 206 residues long: MLGLIGKKVGMTQIFQKNGIVVPVTVIEFQPNYIIGKKTVDRDGYSALIAGSVDLKGSKVSKPIKGQYKSLKDIEPKKYVIELKGLDGYDAGDEIKVDVFKSVKYVDVTGTTKGKGFQGAMKRHNFSGGPSSHGSKFHRHLGGTGQATTPARTFKGTKMAGRMGGNQQTIQNLEVVLINEEKRAILVKGAVPGAKGSFVVVKKSKK.

The interval 127–151 (SGGPSSHGSKFHRHLGGTGQATTPA) is disordered.

The protein belongs to the universal ribosomal protein uL3 family. Part of the 50S ribosomal subunit. Forms a cluster with proteins L14 and L19.

Its function is as follows. One of the primary rRNA binding proteins, it binds directly near the 3'-end of the 23S rRNA, where it nucleates assembly of the 50S subunit. The sequence is that of Large ribosomal subunit protein uL3 from Borreliella afzelii (strain PKo) (Borrelia afzelii).